The primary structure comprises 155 residues: 6,7-dimethyl-8-ribityllumazine synthase (155 aa).

Residues phenylalanine 23, 57-59 (AFE), and 81-83 (AVI) each bind 5-amino-6-(D-ribitylamino)uracil. 86 to 87 (ST) is a (2S)-2-hydroxy-3-oxobutyl phosphate binding site. Histidine 89 serves as the catalytic Proton donor. Residue phenylalanine 114 participates in 5-amino-6-(D-ribitylamino)uracil binding. A (2S)-2-hydroxy-3-oxobutyl phosphate-binding site is contributed by arginine 128.

This sequence belongs to the DMRL synthase family.

The catalysed reaction is (2S)-2-hydroxy-3-oxobutyl phosphate + 5-amino-6-(D-ribitylamino)uracil = 6,7-dimethyl-8-(1-D-ribityl)lumazine + phosphate + 2 H2O + H(+). The protein operates within cofactor biosynthesis; riboflavin biosynthesis; riboflavin from 2-hydroxy-3-oxobutyl phosphate and 5-amino-6-(D-ribitylamino)uracil: step 1/2. In terms of biological role, catalyzes the formation of 6,7-dimethyl-8-ribityllumazine by condensation of 5-amino-6-(D-ribitylamino)uracil with 3,4-dihydroxy-2-butanone 4-phosphate. This is the penultimate step in the biosynthesis of riboflavin. In Geobacter sulfurreducens (strain ATCC 51573 / DSM 12127 / PCA), this protein is 6,7-dimethyl-8-ribityllumazine synthase.